The chain runs to 311 residues: Methionyl-tRNA formyltransferase (311 aa).

Residue 109–112 (SLLP) participates in (6S)-5,6,7,8-tetrahydrofolate binding.

The protein belongs to the Fmt family.

It carries out the reaction L-methionyl-tRNA(fMet) + (6R)-10-formyltetrahydrofolate = N-formyl-L-methionyl-tRNA(fMet) + (6S)-5,6,7,8-tetrahydrofolate + H(+). In terms of biological role, attaches a formyl group to the free amino group of methionyl-tRNA(fMet). The formyl group appears to play a dual role in the initiator identity of N-formylmethionyl-tRNA by promoting its recognition by IF2 and preventing the misappropriation of this tRNA by the elongation apparatus. In Staphylococcus aureus (strain bovine RF122 / ET3-1), this protein is Methionyl-tRNA formyltransferase.